The following is an 814-amino-acid chain: Phenylalanine--tRNA ligase beta subunit (814 aa).

The tRNA-binding domain maps to 39 to 153; that stretch reads SKNVNGVVLG…LKHELGTPVS (115 aa). The 87-residue stretch at 414-500 folds into the B5 domain; it reads NEDIFIKLRR…RLIGYDRFDL (87 aa). Positions 478, 484, 487, and 488 each coordinate Mg(2+). The FDX-ACB domain maps to 720 to 813; sequence PIVPKIERDI…IEKSFQTKLR (94 aa).

It belongs to the phenylalanyl-tRNA synthetase beta subunit family. Type 1 subfamily. As to quaternary structure, tetramer of two alpha and two beta subunits. Mg(2+) is required as a cofactor.

It localises to the cytoplasm. The enzyme catalyses tRNA(Phe) + L-phenylalanine + ATP = L-phenylalanyl-tRNA(Phe) + AMP + diphosphate + H(+). This chain is Phenylalanine--tRNA ligase beta subunit, found in Prochlorococcus marinus (strain MIT 9312).